Here is a 244-residue protein sequence, read N- to C-terminus: ATP synthase subunit 4, mitochondrial (244 aa).

The transit peptide at 1–35 (MSMSMGVRGLALRSVSKTLFSQGVRCPSMVIGARY) directs the protein to the mitochondrion. A Phosphoserine modification is found at Ser144.

It belongs to the eukaryotic ATPase B chain family. In terms of assembly, F-type ATPases have 2 components, CF(1) - the catalytic core - and CF(0) - the membrane proton channel. In yeast, the dimeric form of ATP synthase consists of 17 polypeptides: alpha, beta, gamma, delta, epsilon, 4 (B), 5 (OSCP), 6 (A), 8, 9 (C), d, E (Tim11), f, g, h, i/j and k.

It localises to the mitochondrion. It is found in the mitochondrion inner membrane. In terms of biological role, mitochondrial membrane ATP synthase (F(1)F(0) ATP synthase or Complex V) produces ATP from ADP in the presence of a proton gradient across the membrane which is generated by electron transport complexes of the respiratory chain. F-type ATPases consist of two structural domains, F(1) - containing the extramembraneous catalytic core, and F(0) - containing the membrane proton channel, linked together by a central stalk and a peripheral stalk. During catalysis, ATP synthesis in the catalytic domain of F(1) is coupled via a rotary mechanism of the central stalk subunits to proton translocation. Part of the complex F(0) domain and the peripheric stalk, which acts as a stator to hold the catalytic alpha(3)beta(3) subcomplex and subunit a/ATP6 static relative to the rotary elements. This chain is ATP synthase subunit 4, mitochondrial (ATP4), found in Saccharomyces cerevisiae (strain ATCC 204508 / S288c) (Baker's yeast).